We begin with the raw amino-acid sequence, 187 residues long: Orotate phosphoribosyltransferase (187 aa).

5-phospho-alpha-D-ribose 1-diphosphate-binding positions include Arg103, Lys104, Lys107, and 129–137; that span reads EDVTTSGGS. 2 residues coordinate orotate: Thr133 and Arg161.

It belongs to the purine/pyrimidine phosphoribosyltransferase family. PyrE subfamily. In terms of assembly, homodimer. The cofactor is Mg(2+).

It carries out the reaction orotidine 5'-phosphate + diphosphate = orotate + 5-phospho-alpha-D-ribose 1-diphosphate. It participates in pyrimidine metabolism; UMP biosynthesis via de novo pathway; UMP from orotate: step 1/2. Functionally, catalyzes the transfer of a ribosyl phosphate group from 5-phosphoribose 1-diphosphate to orotate, leading to the formation of orotidine monophosphate (OMP). The sequence is that of Orotate phosphoribosyltransferase from Methanosarcina acetivorans (strain ATCC 35395 / DSM 2834 / JCM 12185 / C2A).